We begin with the raw amino-acid sequence, 299 residues long: MLFDQIASNKRKTWILLLVFFLLLALVGYAVGYLFIRSGLGGLVIALIIGFIYALSMIFQSTEIVMSMNGAREVDEQTAPDLYHVVEDMALVAQIPMPRVFIIDDPALNAFATGSNPQNAAVAATSGLLAIMNREELEAVMGHEVSHIRNYDIRISTIAVALVSAITMLSGMAGRMMWWGGAGRRRSDDDRDGNGLEIIMLVVSLLAIVLAPLAATLVQLAISRQREFLADASSVELTRNPQGMINALDKLDNSKPMSRHVDDASSALYINDPKKGGGFQKLFYTHPPISERIERLKQM.

The next 2 helical transmembrane spans lie at 15 to 35 and 39 to 59; these read ILLL…GYLF and GLGG…SMIF. H143 provides a ligand contact to Zn(2+). E144 is a catalytic residue. Position 147 (H147) interacts with Zn(2+). 2 helical membrane-spanning segments follow: residues 158–178 and 198–218; these read IAVA…RMMW and IIML…ATLV. E227 lines the Zn(2+) pocket.

It belongs to the peptidase M48B family. Requires Zn(2+) as cofactor.

The protein resides in the cell membrane. The polypeptide is Protease HtpX homolog (Streptococcus pneumoniae (strain Hungary19A-6)).